A 201-amino-acid polypeptide reads, in one-letter code: NADH-quinone oxidoreductase subunit C (201 aa).

Belongs to the complex I 30 kDa subunit family. NDH-1 is composed of 14 different subunits. Subunits NuoB, C, D, E, F, and G constitute the peripheral sector of the complex.

The protein localises to the cell inner membrane. The catalysed reaction is a quinone + NADH + 5 H(+)(in) = a quinol + NAD(+) + 4 H(+)(out). Functionally, NDH-1 shuttles electrons from NADH, via FMN and iron-sulfur (Fe-S) centers, to quinones in the respiratory chain. The immediate electron acceptor for the enzyme in this species is believed to be ubiquinone. Couples the redox reaction to proton translocation (for every two electrons transferred, four hydrogen ions are translocated across the cytoplasmic membrane), and thus conserves the redox energy in a proton gradient. The polypeptide is NADH-quinone oxidoreductase subunit C (Ruegeria sp. (strain TM1040) (Silicibacter sp.)).